The sequence spans 185 residues: Ribosome-recycling factor (185 aa).

Belongs to the RRF family.

It is found in the cytoplasm. Functionally, responsible for the release of ribosomes from messenger RNA at the termination of protein biosynthesis. May increase the efficiency of translation by recycling ribosomes from one round of translation to another. This chain is Ribosome-recycling factor, found in Treponema denticola (strain ATCC 35405 / DSM 14222 / CIP 103919 / JCM 8153 / KCTC 15104).